Reading from the N-terminus, the 360-residue chain is Phenylalanine--tRNA ligase alpha subunit (360 aa).

Glu260 contacts Mg(2+).

Belongs to the class-II aminoacyl-tRNA synthetase family. Phe-tRNA synthetase alpha subunit type 1 subfamily. In terms of assembly, tetramer of two alpha and two beta subunits. Requires Mg(2+) as cofactor.

The protein resides in the cytoplasm. The enzyme catalyses tRNA(Phe) + L-phenylalanine + ATP = L-phenylalanyl-tRNA(Phe) + AMP + diphosphate + H(+). The protein is Phenylalanine--tRNA ligase alpha subunit of Methylobacterium radiotolerans (strain ATCC 27329 / DSM 1819 / JCM 2831 / NBRC 15690 / NCIMB 10815 / 0-1).